A 261-amino-acid polypeptide reads, in one-letter code: Imidazole glycerol phosphate synthase subunit HisF (261 aa).

Active-site residues include aspartate 11 and aspartate 130.

The protein belongs to the HisA/HisF family. In terms of assembly, heterodimer of HisH and HisF.

Its subcellular location is the cytoplasm. It catalyses the reaction 5-[(5-phospho-1-deoxy-D-ribulos-1-ylimino)methylamino]-1-(5-phospho-beta-D-ribosyl)imidazole-4-carboxamide + L-glutamine = D-erythro-1-(imidazol-4-yl)glycerol 3-phosphate + 5-amino-1-(5-phospho-beta-D-ribosyl)imidazole-4-carboxamide + L-glutamate + H(+). The protein operates within amino-acid biosynthesis; L-histidine biosynthesis; L-histidine from 5-phospho-alpha-D-ribose 1-diphosphate: step 5/9. Its function is as follows. IGPS catalyzes the conversion of PRFAR and glutamine to IGP, AICAR and glutamate. The HisF subunit catalyzes the cyclization activity that produces IGP and AICAR from PRFAR using the ammonia provided by the HisH subunit. The protein is Imidazole glycerol phosphate synthase subunit HisF of Limosilactobacillus fermentum (strain NBRC 3956 / LMG 18251) (Lactobacillus fermentum).